The chain runs to 119 residues: Non-structural protein 3b (119 aa).

Residues 2 to 83 enclose the DRBM domain; it reads DYVSLLNQFW…ARLICEQLQA (82 aa).

In terms of assembly, interacts with host RUNX1 isoform b.

It localises to the host nucleus. The protein localises to the host nucleolus. It is found in the host mitochondrion. Induces host cell G0/G1 arrest and apoptosis. This is Non-structural protein 3b from Tylonycteris pachypus (Lesser bamboo bat).